The chain runs to 1026 residues: uncharacterized protein (1026 aa).

4 WD repeats span residues 14–53, 62–104, 148–187, and 937–977; these read LLDE…HFTL, HSVS…RRAT, GHED…LTFK, and NAEC…VKFL.

It is found in the cytoplasm. The protein localises to the nucleus. This is an uncharacterized protein from Schizosaccharomyces pombe (strain 972 / ATCC 24843) (Fission yeast).